The following is a 901-amino-acid chain: MLIPSKLSRPVRLDHTVVRERLLAKLSGANNFRLALITSPAGYGKTTLISQWAAGKNDIGWYSLDEGDNQQERFASYLIAAVQQATNGHCAICETMAQKRQYASLTSLFAQLFIELAEWHSPLYLVIDDYHLITNPVIHESMRFFIRHQPENLTLVVLSRNLPQLGIANLRVRDQLLEIGSQQLAFTHQEAKQFFDCRLSSPIEAAESSRICDDVSGWATALQLIALSARQNTHSAHKSARRLAGINASHLSDYLVDEVLDNVDLATRHFLLKSAILRSMNDALITRVTGEENGQMRLEEIERQGLFLQRMDDTGEWFCYHPLFGNFLRQRCQWELAAELPEIHRAAAESWMAQGFPSEAIHHALAAGDALMLRDILLNHAWSLFNHSELSLLEESLKALPWDSLLENPQLVLLQAWLMQSQHRYGEVNTLLARAEHEIKDIREGTMHAEFNALRAQVAINDGNPDEAERLAKLALEELPPGWFYSRIVATSVLGEVLHCKGELTRSLALMQQTEQMARQHDVWHYALWSLIQQSEILFAQGFLQTAWETQEKAFQLINEQHLEQLPMHEFLVRIRAQLLWAWARLDEAEASARSGIEVLSSYQPQQQLQCLAMLIQCSLARGDLDNARSQLNRLENLLGNGKYHSDWISNANKVRVIYWQMTGDKAAAANWLRHTAKPEFANNHFLQGQWRNIARAQILLGEFESAEIVLEELNENARSLRLMSDLNRNLLLLNQLYWQAGRKSDAQRVLLDALKLANRTGFISHFVIEGEAMAQQLRQLIQLNTLPELEQHRAQRILREINQHHRHKFAHFDENFVERLLNHPEVPELIRTSPLTQREWQVLGLIYSGYSNEQIAGELEVAATTIKTHIRNLYQKLGVAHRQAAVQHAQKLLKMMGYGV.

ATP is bound at residue 39 to 46 (SPAGYGKT). An HTH luxR-type domain is found at 829–894 (ELIRTSPLTQ…AAVQHAQKLL (66 aa)). The H-T-H motif DNA-binding region spans 853–872 (NEQIAGELEVAATTIKTHIR).

The protein belongs to the MalT family. In terms of assembly, monomer in solution. Oligomerizes to an active state in the presence of the positive effectors ATP and maltotriose.

Activated by ATP and maltotriose, which are both required for DNA binding. Functionally, positively regulates the transcription of the maltose regulon whose gene products are responsible for uptake and catabolism of malto-oligosaccharides. Specifically binds to the promoter region of its target genes, recognizing a short DNA motif called the MalT box. This Escherichia coli O45:K1 (strain S88 / ExPEC) protein is HTH-type transcriptional regulator MalT.